Reading from the N-terminus, the 214-residue chain is Ribosomal protein uL16-like (214 aa).

Belongs to the universal ribosomal protein uL16 family. Component of a male germ cell-specific 60S large ribosomal subunit (LSU), which contains RPL10L and RPL39L, instead of RPL10 and RPL39 paralogs. The composition of the rest of the complex is similar to classical ribosomes. In terms of tissue distribution, almost testis-specific. Also expressed in pre- and postmenopausal ovary.

The protein localises to the cytoplasm. Its function is as follows. Testis-specific component of the ribosome, which is required for the transition from prophase to metaphase in male meiosis I. Compensates for the inactivated X-linked RPL10 paralog during spermatogenesis. The ribosome is a large ribonucleoprotein complex responsible for the synthesis of proteins in the cell. The male germ cell-specific ribosome displays a ribosomal polypeptide exit tunnel of distinct size and charge states compared with the classical ribosome. It is responsible for regulating the biosynthesis and folding of a subset of male germ-cell-specific proteins that are essential for the formation of sperm. In Homo sapiens (Human), this protein is Ribosomal protein uL16-like.